The primary structure comprises 258 residues: Axonemal dynein light intermediate polypeptide 1 (258 aa).

2 disordered regions span residues 1-60 (MIPP…CVPD) and 202-231 (DLER…EEKK). A coiled-coil region spans residues 176-255 (MRKALQAEQG…LKAQLEGIIA (80 aa)).

This sequence belongs to the inner dynein arm light chain family. Interacts with CFAP45. Interacts with DYNC1H1. In terms of tissue distribution, predominantly expressed in the testis, also detected at lower levels in several tissues expressing cilia. Strongly expressed in elongating spermatid cells (at protein level).

It localises to the cell projection. It is found in the cilium. Its subcellular location is the flagellum. The protein resides in the dynein axonemal particle. The protein localises to the cytoplasm. Involved in sperm flagellum assembly. In Mus musculus (Mouse), this protein is Axonemal dynein light intermediate polypeptide 1.